The chain runs to 241 residues: Peroxisomal membrane protein 11C (241 aa).

Over Met1–Arg124 the chain is Cytoplasmic. The helical transmembrane segment at Trp125–Leu149 threads the bilayer. Over Lys150 to Pro211 the chain is Lumenal. A helical transmembrane segment spans residues Trp212 to Tyr227. Over Gln228–Pro241 the chain is Cytoplasmic.

It belongs to the peroxin-11 family. As to quaternary structure, homodimer. Heterodimer with either PEX11A or PEX11B. Interacts with FIS1.

It localises to the peroxisome membrane. Its function is as follows. Promotes membrane protrusion and elongation on the peroxisomal surface. The protein is Peroxisomal membrane protein 11C (PEX11G) of Homo sapiens (Human).